Consider the following 327-residue polypeptide: MVREKVKVSTRTLQWKCVESRRDSKRLYYGRFILSPLMKGQADTIGIAMRRALLGEIEGTCITRAKSENIPHDYSNIVGIQESVHEILMNLNEIVLRSNLYGTRNALICVQGPGYITARDIILPPSVEIIDNTQHIATLTEPIDLCIELKIERNRGYSLKMSNNFEDRSYPIDAVFMPVQNANHSIHSYGNGNEKQEILFLEIWTNGSLTPKEALHEASRNLINLFIPFLHVEEETFYLENNQHQVTLPFFPFHNRLVNLRKKTKELAFQYIFIDQLELPPRIYNCLKKSNIHTLLDLLNNSQEDLIKIEHFHVEDVKKILDILEKK.

An alpha N-terminal domain (alpha-NTD) region spans residues 1 to 233 (MVREKVKVST…NLFIPFLHVE (233 aa)). Residues 264 to 327 (TKELAFQYIF…KKILDILEKK (64 aa)) form an alpha C-terminal domain (alpha-CTD) region.

Belongs to the RNA polymerase alpha chain family. In plastids the minimal PEP RNA polymerase catalytic core is composed of four subunits: alpha, beta, beta', and beta''. When a (nuclear-encoded) sigma factor is associated with the core the holoenzyme is formed, which can initiate transcription.

It localises to the plastid. The protein localises to the chloroplast. The catalysed reaction is RNA(n) + a ribonucleoside 5'-triphosphate = RNA(n+1) + diphosphate. In terms of biological role, DNA-dependent RNA polymerase catalyzes the transcription of DNA into RNA using the four ribonucleoside triphosphates as substrates. The sequence is that of DNA-directed RNA polymerase subunit alpha from Capsella bursa-pastoris (Shepherd's purse).